A 312-amino-acid polypeptide reads, in one-letter code: Olfactory receptor 2T8 (312 aa).

The Extracellular segment spans residues 1-26; the sequence is MENGSYTSYFILLGLFNHTRAHQVLF. N-linked (GlcNAc...) asparagine glycosylation is found at asparagine 3 and asparagine 17. The chain crosses the membrane as a helical span at residues 27-47; sequence MMVLSIVLTSLFGNSLMILLI. The Cytoplasmic segment spans residues 48 to 55; that stretch reads HWDHRLHT. Residues 56–76 traverse the membrane as a helical segment; that stretch reads PMYFLLSQLSLMDVMLVSTTV. Over 77–96 the chain is Extracellular; the sequence is PKMAADYLTGSKAISRAGCG. Residues cysteine 95 and cysteine 177 are joined by a disulfide bond. The chain crosses the membrane as a helical span at residues 97 to 117; that stretch reads AQIFFLPTLGGGECFLLAAMA. Over 118–143 the chain is Cytoplasmic; sequence YDRYAAVCHPLRYPTLMSWQLCLRMN. The chain crosses the membrane as a helical span at residues 144–164; it reads LSCWLLGAADGLLQAVATLSF. Topologically, residues 165 to 201 are extracellular; sequence PYCGAHEIDHFFCETPVLVRLACADTSVFENAMYICC. A helical membrane pass occupies residues 202-222; it reads VLMLLVPFSLILSSYGLILAA. The Cytoplasmic portion of the chain corresponds to 223 to 234; sequence VLHMRSTEARKK. A helical membrane pass occupies residues 235 to 255; that stretch reads AFATCSSHVAVVGLFYGAAIF. Residues 256 to 269 are Extracellular-facing; that stretch reads TYMRPKSHRSTNHD. Residues 270-290 traverse the membrane as a helical segment; it reads KVVSAFYTMFTPLLNPLIYSV. The Cytoplasmic segment spans residues 291-312; sequence KNSEVKGALTRCMGRCVALSRE.

Belongs to the G-protein coupled receptor 1 family.

The protein resides in the cell membrane. Odorant receptor. This chain is Olfactory receptor 2T8 (OR2T8), found in Homo sapiens (Human).